The following is a 443-amino-acid chain: Anamorsin homolog (443 aa).

Residues 136-301 are N-terminal SAM-like domain; the sequence is LSSAPRVLVL…AAGVADALSG (166 aa). Residues 302–331 form a linker region; the sequence is NRGALPNGTAQTDGDDFIDESTLIDPTESY. Positions 341, 348, 351, and 353 each coordinate [2Fe-2S] cluster. The segment at 341–353 is fe-S binding site A; sequence CASRPKACPNCTC. 4 residues coordinate [4Fe-4S] cluster: Cys380, Cys383, Cys391, and Cys394. 2 consecutive short sequence motifs (cx2C motif) follow at residues 380–383 and 391–394; these read CGNC and CAGC. Residues 380–394 are fe-S binding site B; sequence CGNCYLGDAFRCAGC.

Belongs to the anamorsin family. As to quaternary structure, monomer. [2Fe-2S] cluster serves as cofactor. Requires [4Fe-4S] cluster as cofactor.

Its subcellular location is the cytoplasm. The protein resides in the mitochondrion intermembrane space. Functionally, component of the cytosolic iron-sulfur (Fe-S) protein assembly (CIA) machinery. Required for the maturation of extramitochondrial Fe-S proteins. Part of an electron transfer chain functioning in an early step of cytosolic Fe-S biogenesis, facilitating the de novo assembly of a [4Fe-4S] cluster on the cytosolic Fe-S scaffold complex. Electrons are transferred from NADPH via a FAD- and FMN-containing diflavin oxidoreductase. Together with the diflavin oxidoreductase, also required for the assembly of the diferric tyrosyl radical cofactor of ribonucleotide reductase (RNR), probably by providing electrons for reduction during radical cofactor maturation in the catalytic small subunit. This Toxoplasma gondii (strain ATCC 50861 / VEG) protein is Anamorsin homolog.